A 299-amino-acid polypeptide reads, in one-letter code: Non-homologous end-joining factor 1 (299 aa).

Positions 1 to 135 (MEELEQGLLM…ASPSLVSQHL (135 aa)) are globular head. Positions 128–170 (PSLVSQHLIRPLMGMSLALQCQVRELATLLHMKDLEIQDYQES) form a coiled coil. Phosphoserine; by PRKDC is present on residues serine 132, serine 203, serine 245, and serine 251. Residues 224-288 (QEVQVGQKHQ…GPLQRPQLSK (65 aa)) are C-terminal tail. Residues 255 to 266 (NQPEQLVSSAPT) are compositionally biased toward polar residues. The tract at residues 255–299 (NQPEQLVSSAPTLSAPEKESTGTSGPLQRPQLSKVKRKKPRGLFS) is disordered. Serine 263 bears the Phosphoserine mark. Threonine 266 carries the phosphothreonine modification. The residue at position 287 (serine 287) is a Phosphoserine. Over residues 288–299 (KVKRKKPRGLFS) the composition is skewed to basic residues. The XLM signature appears at 289-299 (VKRKKPRGLFS).

It belongs to the XRCC4-XLF family. XLF subfamily. Homodimer; mainly exists as a homodimer when not associated with XRCC4. Interacts with XRCC4; the interaction is direct and is mediated via a head-to-head interaction between N-terminal head regions. Component of the core long-range non-homologous end joining (NHEJ) complex (also named DNA-PK complex) composed of PRKDC, LIG4, XRCC4, XRCC6/Ku70, XRCC5/Ku86 and NHEJ1/XLF. Additional component of the NHEJ complex includes PAXX. Following autophosphorylation, PRKDC dissociates from DNA, leading to formation of the short-range NHEJ complex, composed of LIG4, XRCC4, XRCC6/Ku70, XRCC5/Ku86 and NHEJ1/XLF. Interacts with POLL (DNA polymerase lambda); promoting POLL recruitment to double-strand breaks (DSBs) and stimulation of the end-filling activity of POLL. Phosphorylated by PRKDC at the C-terminus in response to DNA damage. Phosphorylations by PRKDC at the C-terminus of XRCC4 and NHEJ1/XLF are highly redundant and regulate ability of the XRCC4-NHEJ1/XLF subcomplex to bridge DNA. Phosphorylation does not prevent interaction with XRCC4 but disrupts ability to bridge DNA and promotes detachment from DNA. As to expression, ubiquitously expressed.

It localises to the nucleus. It is found in the chromosome. Functionally, DNA repair protein involved in DNA non-homologous end joining (NHEJ); it is required for double-strand break (DSB) repair and V(D)J recombination and is also involved in telomere maintenance. Plays a key role in NHEJ by promoting the ligation of various mismatched and non-cohesive ends. Together with PAXX, collaborates with DNA polymerase lambda (POLL) to promote joining of non-cohesive DNA ends. May act in concert with XRCC5-XRCC6 (Ku) to stimulate XRCC4-mediated joining of blunt ends and several types of mismatched ends that are non-complementary or partially complementary. In some studies, has been shown to associate with XRCC4 to form alternating helical filaments that bridge DNA and act like a bandage, holding together the broken DNA until it is repaired. Alternatively, it has also been shown that rather than forming filaments, a single NHEJ1 dimer interacts through both head domains with XRCC4 to promote the close alignment of DNA ends. The XRCC4-NHEJ1/XLF subcomplex binds to the DNA fragments of a DSB in a highly diffusive manner and robustly bridges two independent DNA molecules, holding the broken DNA fragments in close proximity to one other. The mobility of the bridges ensures that the ends remain accessible for further processing by other repair factors. Binds DNA in a length-dependent manner. This is Non-homologous end-joining factor 1 from Homo sapiens (Human).